A 222-amino-acid chain; its full sequence is Type II restriction enzyme AbrI (222 aa).

Disordered stretches follow at residues 21–45 (GNRE…RRDR) and 161–222 (NQRR…SPRI). The span at 22–42 (NREKARQKQQESGKPDQGERR) shows a compositional bias: basic and acidic residues. Low complexity predominate over residues 188–202 (SSASGSSRSSFTPRP).

This sequence belongs to the XhoI type II restriction endonuclease family.

It carries out the reaction Endonucleolytic cleavage of DNA to give specific double-stranded fragments with terminal 5'-phosphates.. Its function is as follows. A P subtype restriction enzyme that recognizes the double-stranded sequence 5'-CTCGAG-3' and cleaves after C-1. In Azospirillum brasilense, this protein is Type II restriction enzyme AbrI (abrIR).